The primary structure comprises 647 residues: MIKITFPDGAVREFESGVTTFDIAESISKSLAKKALAGKFNDQLIDTTRAIEEDGSIEIVTPDHKDAYEVLRHSAAHLFAQAAKRLFPNLHLGVGPAIAEGFYYDTDNAEGQISNEDLPRIEAEMQKIVTENYPCIREEVTKEEALELFKDDPYKVELINEHAGAGLTVYRQGEFVDLCRGPHVPSTGRIQVFHLLNVAGAYWRGNSDNNMMQRIYGTAWFDKKDLKAYLTRLEEAKERDHRKLGKELDLFMISQEVGQGLPFWLPDGATIRRTLERYITDKELASGYQHVYTPPLASVELYKTSGHWDHYQEDMFPVMDMGDGEEFVLRPMNCPHHIQVYKNHVRSYRELPIRIAELGMMHRYEKSGALSGLQRVREMTLNDGHIFVTPEQIQEEFQRALQLIIDVYADFNLTDYRFRLSYRDPNDTRKYYDNDEMWENAQSMLKAALDEMGVDYFEAEGEAAFYGPKLDIQVKTALGNEETLSTIQLDFLLPERFDLKYIGADGEEHRPVMIHRGVISTMERFTAILIETYKGAFPTWLAPHQVTVIPISNEAHIDYAWEVAKTLRDRGVRADVDDRNEKMQYKIRASQTSKIPYQLIVGDKEMEDKSVNVRRYGSKATHTESVEEFVENILADIARKSCPDAQA.

The region spanning 1 to 61 (MIKITFPDGA…EEDGSIEIVT (61 aa)) is the TGS domain. Residues 240–538 (DHRKLGKELD…LIETYKGAFP (299 aa)) form a catalytic region. Zn(2+) is bound by residues C334, H385, and H515.

This sequence belongs to the class-II aminoacyl-tRNA synthetase family. In terms of assembly, homodimer. Zn(2+) serves as cofactor.

The protein localises to the cytoplasm. The catalysed reaction is tRNA(Thr) + L-threonine + ATP = L-threonyl-tRNA(Thr) + AMP + diphosphate + H(+). Its function is as follows. Catalyzes the attachment of threonine to tRNA(Thr) in a two-step reaction: L-threonine is first activated by ATP to form Thr-AMP and then transferred to the acceptor end of tRNA(Thr). Also edits incorrectly charged L-seryl-tRNA(Thr). The sequence is that of Threonine--tRNA ligase from Streptococcus pyogenes serotype M28 (strain MGAS6180).